Here is a 637-residue protein sequence, read N- to C-terminus: Phosphomethylpyrimidine synthase (637 aa).

Substrate contacts are provided by residues N242, M271, Y300, H336, 356 to 358 (SRG), 397 to 400 (DGLR), and E436. H440 serves as a coordination point for Zn(2+). Substrate is bound at residue Y463. H504 contacts Zn(2+). Residues C584, C587, and C592 each contribute to the [4Fe-4S] cluster site.

Belongs to the ThiC family. As to quaternary structure, homodimer. [4Fe-4S] cluster serves as cofactor.

The catalysed reaction is 5-amino-1-(5-phospho-beta-D-ribosyl)imidazole + S-adenosyl-L-methionine = 4-amino-2-methyl-5-(phosphooxymethyl)pyrimidine + CO + 5'-deoxyadenosine + formate + L-methionine + 3 H(+). The protein operates within cofactor biosynthesis; thiamine diphosphate biosynthesis. Catalyzes the synthesis of the hydroxymethylpyrimidine phosphate (HMP-P) moiety of thiamine from aminoimidazole ribotide (AIR) in a radical S-adenosyl-L-methionine (SAM)-dependent reaction. The polypeptide is Phosphomethylpyrimidine synthase (Herminiimonas arsenicoxydans).